Here is a 95-residue protein sequence, read N- to C-terminus: uncharacterized protein (95 aa).

The N-terminal stretch at 1 to 19 (MAILMLSLQLILLLIPSIS) is a signal peptide. N-linked (GlcNAc...) asparagine glycans are attached at residues N38 and N41.

The protein resides in the secreted. This is an uncharacterized protein from Homo sapiens (Human).